A 1193-amino-acid chain; its full sequence is Sperm-associated antigen 5 (1193 aa).

The tract at residues 1–48 (MWRVKKLSLSLSPSPQTGKPSMRTPLRELTLQPGALTNSGKRSPACSS) is disordered. Phosphoserine is present on residues S12, S14, S43, S62, and S66. Polar residues predominate over residues 35 to 48 (ALTNSGKRSPACSS). The tract at residues 96–117 (ESDEQPLDPIPQISSTPKTSEE) is disordered. A Phosphothreonine; by GSK3-beta modification is found at T111. S135, S159, and S334 each carry phosphoserine. A Phosphothreonine modification is found at T336. S341, S353, and S362 each carry phosphoserine. Residues 390-405 (PSAPQEKSTNTSQTGL) are compositionally biased toward polar residues. The segment at 390 to 416 (PSAPQEKSTNTSQTGLVGTKHSTSETE) is disordered. The interval 482-850 (NKLQHLKESH…LKDTVENLTA (369 aa)) is interaction with KNSTRN. Coiled coils occupy residues 545 to 608 (CCFD…SMRE) and 759 to 868 (QLTQ…EKTR). T937 bears the Phosphothreonine; by GSK3-beta mark. S974 is subject to Phosphoserine; by GSK3-beta. A Phosphothreonine; by GSK3-beta modification is found at T978. The stretch at 979-1174 (ELQSLCSLLQ…VQHIYKTLLS (196 aa)) forms a coiled coil.

In terms of assembly, homodimer, with a globular head domain and a long stalk. Homooligomer; the globular head domains associate, resulting in aster-like structures. Binds to microtubules in the mitotic spindle. Interacts with DCLRE1B/Apollo. Part of an astrin (SPAG5)-kinastrin (SKAP) complex containing KNSTRN, SPAG5, PLK1, DYNLL1 and SGO2. Interacts with KNSTRN. Interacts with RPTOR; this interaction competes with RPTOR binding to MTOR, resulting in decreased mTORC1 formation. Interacts with G3BP1. The complex formed with G3BP1 AND RPTOR is increased by oxidative stress. Interacts with OSBPL8, PCM1 and CDK5RAP2. Interacts (via C-terminus) with NUMA1 (via C-terminus); this interaction promotes the recruitment of SPAG5 to the microtubules at spindle poles in a dynein-dynactin-dependent manner. Interacts with DYNLL1. In terms of processing, phosphorylated by AURKA. As to expression, highly expressed in testis. Detected at low levels in placenta, liver, pancreas, thymus and colon.

Its subcellular location is the cytoplasm. It is found in the cytoskeleton. The protein resides in the spindle. The protein localises to the spindle pole. It localises to the chromosome. Its subcellular location is the centromere. It is found in the kinetochore. The protein resides in the midbody. The protein localises to the microtubule organizing center. It localises to the centrosome. Its subcellular location is the cytoplasmic granule. It is found in the centriolar satellite. Functionally, essential component of the mitotic spindle required for normal chromosome segregation and progression into anaphase. Required for chromosome alignment, normal timing of sister chromatid segregation, and maintenance of spindle pole architecture. In complex with SKAP, promotes stable microtubule-kinetochore attachments. May contribute to the regulation of separase activity. May regulate AURKA localization to mitotic spindle, but not to centrosomes and CCNB1 localization to both mitotic spindle and centrosomes. Involved in centriole duplication. Required for CDK5RAP2, CEP152, WDR62 and CEP63 centrosomal localization and promotes the centrosomal localization of CDK2. In non-mitotic cells, upon stress induction, inhibits mammalian target of rapamycin complex 1 (mTORC1) association and recruits the mTORC1 component RPTOR to stress granules (SGs), thereby preventing mTORC1 hyperactivation-induced apoptosis. May enhance GSK3B-mediated phosphorylation of other substrates, such as MAPT/TAU. The protein is Sperm-associated antigen 5 (SPAG5) of Homo sapiens (Human).